Consider the following 544-residue polypeptide: Methionine--tRNA ligase 2 (544 aa).

The 'HIGH' region signature appears at 10-20 (PYANGSLHLGH). Zn(2+) is bound by residues Cys-141, Cys-144, Cys-153, and Cys-156. The 'KMSKS' region signature appears at 329–333 (KLSTS). Thr-332 lines the ATP pocket.

This sequence belongs to the class-I aminoacyl-tRNA synthetase family. MetG type 1 subfamily. In terms of assembly, monomer. Zn(2+) is required as a cofactor.

Its subcellular location is the cytoplasm. The enzyme catalyses tRNA(Met) + L-methionine + ATP = L-methionyl-tRNA(Met) + AMP + diphosphate. Is required not only for elongation of protein synthesis but also for the initiation of all mRNA translation through initiator tRNA(fMet) aminoacylation. In Bacillus anthracis, this protein is Methionine--tRNA ligase 2.